Here is a 548-residue protein sequence, read N- to C-terminus: Glucose-6-phosphate isomerase (548 aa).

Glutamate 359 acts as the Proton donor in catalysis. Residues histidine 390 and lysine 510 contribute to the active site.

It belongs to the GPI family.

Its subcellular location is the cytoplasm. It catalyses the reaction alpha-D-glucose 6-phosphate = beta-D-fructose 6-phosphate. Its pathway is carbohydrate biosynthesis; gluconeogenesis. It participates in carbohydrate degradation; glycolysis; D-glyceraldehyde 3-phosphate and glycerone phosphate from D-glucose: step 2/4. In terms of biological role, catalyzes the reversible isomerization of glucose-6-phosphate to fructose-6-phosphate. The protein is Glucose-6-phosphate isomerase of Gloeobacter violaceus (strain ATCC 29082 / PCC 7421).